We begin with the raw amino-acid sequence, 174 residues long: Phospholipase A2-like protein Y52B11A.8 (174 aa).

Residues 1–18 form the signal peptide; that stretch reads MRGLLVATWIFVSVAASA. 2 N-linked (GlcNAc...) asparagine glycosylation sites follow: N49 and N143. The tract at residues 137–174 is disordered; the sequence is YEASGPNASTTEESPAEKDDYDYESHVAGLNATPSSST.

It belongs to the phospholipase A2 family.

It localises to the secreted. In Caenorhabditis elegans, this protein is Phospholipase A2-like protein Y52B11A.8.